Here is a 273-residue protein sequence, read N- to C-terminus: BTB and MATH domain-containing protein 15 (273 aa).

The MATH domain occupies 7–123 (EFVFHHTFKD…DNSFTIEACV (117 aa)). The BTB domain maps to 147 to 206 (SDVILVVGDEKFYVLKLFLASHSSYFNALFLGKFKEADQSEVTLQNIDPTDFQSLLEVLY).

As to quaternary structure, interacts with cul-3.

It participates in protein modification; protein ubiquitination. Its function is as follows. Probable substrate-specific adapter of an E3 ubiquitin-protein ligase complex which mediates the ubiquitination and subsequent proteasomal degradation of target proteins. The polypeptide is BTB and MATH domain-containing protein 15 (bath-15) (Caenorhabditis elegans).